Reading from the N-terminus, the 246-residue chain is MQALLFLMALLLPSGAGAEEIIGGVESEPHSRPYMAYVNTFRRKGYVAICGGFLITPQFVMTAAHCRGRRMTVTLGAHNVRKRECTQQKIKVEKYILPPNYNVSSKFNDIVLLKLKKQANLTSAVDVVPLPGPSDFAKPGTMCWAAGWGRTGVKKIISHTLREVELKIVGEKACKIFRHYKDSLQICVGSSTKVASVYMGDSGGPLLCAGVAHGIVSSGRGNAKPPAIFTRISPHVPWINRVIKGK.

Positions methionine 1–alanine 18 are cleaved as a signal peptide. A propeptide spans glutamate 19–glutamate 20 (activation peptide). Positions isoleucine 21–lysine 244 constitute a Peptidase S1 domain. Cysteine 50 and cysteine 66 are oxidised to a cystine. Residues histidine 65 and aspartate 109 each act as charge relay system in the active site. 2 disulfide bridges follow: cysteine 143–cysteine 208 and cysteine 174–cysteine 187. Serine 202 acts as the Charge relay system in catalysis.

This sequence belongs to the peptidase S1 family. Granzyme subfamily.

This chain is Mast cell protease-like protein (Mcptl), found in Mus musculus (Mouse).